Reading from the N-terminus, the 519-residue chain is Cytochrome P450 52A12 (519 aa).

Residue Cys467 coordinates heme.

It belongs to the cytochrome P450 family. Heme serves as cofactor.

Its subcellular location is the membrane. Functionally, together with an NADPH cytochrome P450 the enzyme system catalyzes the terminal hydroxylation as the first step in the assimilation of alkanes and fatty acids. This chain is Cytochrome P450 52A12 (CYP52A12), found in Debaryomyces hansenii (Yeast).